The chain runs to 264 residues: Thymidylate synthase (264 aa).

Residues Arg-21 and 126–127 (RR) each bind dUMP. Catalysis depends on Cys-146, which acts as the Nucleophile. DUMP contacts are provided by residues 166 to 169 (RSAD), Asn-177, and 207 to 209 (HLY). Asp-169 provides a ligand contact to (6R)-5,10-methylene-5,6,7,8-tetrahydrofolate. Position 263 (Ala-263) interacts with (6R)-5,10-methylene-5,6,7,8-tetrahydrofolate.

This sequence belongs to the thymidylate synthase family. Bacterial-type ThyA subfamily. As to quaternary structure, homodimer.

Its subcellular location is the cytoplasm. The enzyme catalyses dUMP + (6R)-5,10-methylene-5,6,7,8-tetrahydrofolate = 7,8-dihydrofolate + dTMP. Its pathway is pyrimidine metabolism; dTTP biosynthesis. Functionally, catalyzes the reductive methylation of 2'-deoxyuridine-5'-monophosphate (dUMP) to 2'-deoxythymidine-5'-monophosphate (dTMP) while utilizing 5,10-methylenetetrahydrofolate (mTHF) as the methyl donor and reductant in the reaction, yielding dihydrofolate (DHF) as a by-product. This enzymatic reaction provides an intracellular de novo source of dTMP, an essential precursor for DNA biosynthesis. This is Thymidylate synthase from Bradyrhizobium sp. (strain BTAi1 / ATCC BAA-1182).